A 213-amino-acid polypeptide reads, in one-letter code: Large ribosomal subunit protein uL1 (213 aa).

The protein belongs to the universal ribosomal protein uL1 family. In terms of assembly, part of the 50S ribosomal subunit.

Its function is as follows. Binds directly to 23S rRNA. Probably involved in E site tRNA release. In terms of biological role, protein L1 is also a translational repressor protein, it controls the translation of its operon by binding to its mRNA. The sequence is that of Large ribosomal subunit protein uL1 from Methanocorpusculum labreanum (strain ATCC 43576 / DSM 4855 / Z).